A 298-amino-acid chain; its full sequence is U1 small nuclear ribonucleoprotein A (298 aa).

RRM domains follow at residues 2 to 113 (SALY…KART) and 227 to 298 (KVLL…GFAK).

The protein belongs to the RRM U1 A/B'' family. In terms of assembly, component of the spliceosome where it is associated with snRNP U1.

It is found in the nucleus. Involved in nuclear mRNA splicing. The principal role of the U1A is to help fold or maintain U1 RNA in an active configuration. It is the first snRNP to interact with pre-mRNA. This interaction is required for the subsequent binding of U2 snRNP and the U4/U6/U5 tri-snRNP. The chain is U1 small nuclear ribonucleoprotein A (MUD1) from Saccharomyces cerevisiae (strain ATCC 204508 / S288c) (Baker's yeast).